We begin with the raw amino-acid sequence, 618 residues long: Proline--tRNA ligase (618 aa).

The protein belongs to the class-II aminoacyl-tRNA synthetase family. ProS type 1 subfamily. Homodimer.

The protein resides in the cytoplasm. It carries out the reaction tRNA(Pro) + L-proline + ATP = L-prolyl-tRNA(Pro) + AMP + diphosphate. Its function is as follows. Catalyzes the attachment of proline to tRNA(Pro) in a two-step reaction: proline is first activated by ATP to form Pro-AMP and then transferred to the acceptor end of tRNA(Pro). As ProRS can inadvertently accommodate and process non-cognate amino acids such as alanine and cysteine, to avoid such errors it has two additional distinct editing activities against alanine. One activity is designated as 'pretransfer' editing and involves the tRNA(Pro)-independent hydrolysis of activated Ala-AMP. The other activity is designated 'posttransfer' editing and involves deacylation of mischarged Ala-tRNA(Pro). The misacylated Cys-tRNA(Pro) is not edited by ProRS. In Streptococcus pyogenes serotype M2 (strain MGAS10270), this protein is Proline--tRNA ligase.